The chain runs to 261 residues: Cytochrome c oxidase subunit 3 (261 aa).

Residues 1–15 (MTHQTHAYHMVDPSP) are Mitochondrial matrix-facing. The chain crosses the membrane as a helical span at residues 16-34 (WPLTGALSALLMTSGLTMW). The Mitochondrial intermembrane portion of the chain corresponds to 35–40 (FHYHSV). A helical transmembrane segment spans residues 41–66 (TLLLLGLTTNILTMFQWWRDVVREGT). Residues 67–72 (FQGHHT) lie on the Mitochondrial matrix side of the membrane. A helical membrane pass occupies residues 73–105 (PVVQESLRYGMILFITSEVLFFTGFFWAFYHSS). Residues 106 to 128 (LAPTPELGSYWPPVGVYPLNPLE) are Mitochondrial intermembrane-facing. Residues 129-152 (VPLLNTSVLLASGVTITWAHHSLM) form a helical membrane-spanning segment. Residues 153-155 (EGN) lie on the Mitochondrial matrix side of the membrane. A helical transmembrane segment spans residues 156–183 (RKNMLQALLITILLGVYFTLLQMFEYYE). The Mitochondrial intermembrane portion of the chain corresponds to 184-190 (ASFTISD). The helical transmembrane segment at 191–223 (GIYGSTFFVTTGFHGLHVIIGSTFLLTCFIRQL) threads the bilayer. The Mitochondrial matrix segment spans residues 224–232 (KFHFTSNHH). Residues 233–256 (FGFEAAAWYWHFVDVVWLFLYLSI) form a helical membrane-spanning segment. Topologically, residues 257 to 261 (YWWGS) are mitochondrial intermembrane.

It belongs to the cytochrome c oxidase subunit 3 family. As to quaternary structure, component of the cytochrome c oxidase (complex IV, CIV), a multisubunit enzyme composed of 14 subunits. The complex is composed of a catalytic core of 3 subunits MT-CO1, MT-CO2 and MT-CO3, encoded in the mitochondrial DNA, and 11 supernumerary subunits COX4I, COX5A, COX5B, COX6A, COX6B, COX6C, COX7A, COX7B, COX7C, COX8 and NDUFA4, which are encoded in the nuclear genome. The complex exists as a monomer or a dimer and forms supercomplexes (SCs) in the inner mitochondrial membrane with NADH-ubiquinone oxidoreductase (complex I, CI) and ubiquinol-cytochrome c oxidoreductase (cytochrome b-c1 complex, complex III, CIII), resulting in different assemblies (supercomplex SCI(1)III(2)IV(1) and megacomplex MCI(2)III(2)IV(2)).

The protein localises to the mitochondrion inner membrane. It catalyses the reaction 4 Fe(II)-[cytochrome c] + O2 + 8 H(+)(in) = 4 Fe(III)-[cytochrome c] + 2 H2O + 4 H(+)(out). Component of the cytochrome c oxidase, the last enzyme in the mitochondrial electron transport chain which drives oxidative phosphorylation. The respiratory chain contains 3 multisubunit complexes succinate dehydrogenase (complex II, CII), ubiquinol-cytochrome c oxidoreductase (cytochrome b-c1 complex, complex III, CIII) and cytochrome c oxidase (complex IV, CIV), that cooperate to transfer electrons derived from NADH and succinate to molecular oxygen, creating an electrochemical gradient over the inner membrane that drives transmembrane transport and the ATP synthase. Cytochrome c oxidase is the component of the respiratory chain that catalyzes the reduction of oxygen to water. Electrons originating from reduced cytochrome c in the intermembrane space (IMS) are transferred via the dinuclear copper A center (CU(A)) of subunit 2 and heme A of subunit 1 to the active site in subunit 1, a binuclear center (BNC) formed by heme A3 and copper B (CU(B)). The BNC reduces molecular oxygen to 2 water molecules using 4 electrons from cytochrome c in the IMS and 4 protons from the mitochondrial matrix. This is Cytochrome c oxidase subunit 3 (MT-CO3) from Loxodonta africana (African elephant).